A 291-amino-acid polypeptide reads, in one-letter code: N-acetylmannosamine kinase (291 aa).

ATP contacts are provided by residues 5–12 (AVDIGGTK) and 132–139 (GVGGGIVV). Positions 156, 166, 168, and 173 each coordinate Zn(2+).

The protein belongs to the ROK (NagC/XylR) family. NanK subfamily. In terms of assembly, homodimer.

It carries out the reaction an N-acyl-D-mannosamine + ATP = an N-acyl-D-mannosamine 6-phosphate + ADP + H(+). The protein operates within amino-sugar metabolism; N-acetylneuraminate degradation; D-fructose 6-phosphate from N-acetylneuraminate: step 2/5. Its function is as follows. Catalyzes the phosphorylation of N-acetylmannosamine (ManNAc) to ManNAc-6-P. This chain is N-acetylmannosamine kinase (nanK2), found in Escherichia coli O6:H1 (strain CFT073 / ATCC 700928 / UPEC).